The sequence spans 146 residues: Ribonuclease H (146 aa).

Positions 1-143 (MRKKIIIYTD…CDYLARQAIK (143 aa)) constitute an RNase H type-1 domain. Positions 10, 48, 70, and 135 each coordinate Mg(2+).

The protein belongs to the RNase H family. Monomer. It depends on Mg(2+) as a cofactor.

The protein resides in the cytoplasm. The catalysed reaction is Endonucleolytic cleavage to 5'-phosphomonoester.. Endonuclease that specifically degrades the RNA of RNA-DNA hybrids. In Prosthecochloris aestuarii (strain DSM 271 / SK 413), this protein is Ribonuclease H.